Here is a 787-residue protein sequence, read N- to C-terminus: (-)-kolavenyl diphosphate synthase, chloroplastic (787 aa).

The transit peptide at 1 to 47 (MSFATSLPRPTTTGAAGFGLPLATCISLSVSHSFSPKFGICNNTSLR) directs the protein to the chloroplast. Lys237 lines the substrate pocket. Residues Asp368 and Asp370 each coordinate Mg(2+). The DXDD motif motif lies at 368 to 371 (DSDD). A substrate-binding site is contributed by Lys454.

Belongs to the terpene synthase family. Tpsc subfamily. The cofactor is Mg(2+). In terms of tissue distribution, expressed in peltate glandular trichomes of leaves. Highly expressed in the first leaf pair.

It localises to the plastid. The protein resides in the chloroplast. It carries out the reaction (2E,6E,10E)-geranylgeranyl diphosphate = (-)-kolavenyl diphosphate. Inhibited by high concentrations of magnesium. Involved in the biosynthesis of clerodane diterpenoids natural products, including salvinorin A with potent agonistic activity on brain kappa-opioid receptors, thus conferring hallucinogenic properties. Diterpene synthase that catalyzes the formation of (-)-kolavenyl diphosphate from geranylgeranyl diphosphate (GGPP) as the first reaction in salvinorin A biosynthesis. The protein is (-)-kolavenyl diphosphate synthase, chloroplastic of Salvia divinorum (Maria pastora).